We begin with the raw amino-acid sequence, 383 residues long: Probable cell wall hydrolase LytN (383 aa).

Residues 1–49 (MFVYYCKECFIMNKQQSKVRYSIRKVSIGILSISIGMFLALGMSNKAYA) form the signal peptide. A LysM domain is found at 175–219 (QIYTVKKGDTLSAIALKYKTTVSNIQNTNNIANPNLIFIGQKLKV). Residues 241 to 378 (NSSTLNYLKT…NYENDMIFIR (138 aa)) enclose the Peptidase C51 domain.

It is found in the secreted. In terms of biological role, probably involved in peptidoglycan hydrolysis. The chain is Probable cell wall hydrolase LytN (lytN) from Staphylococcus aureus (strain MSSA476).